The sequence spans 209 residues: Imidazole glycerol phosphate synthase subunit HisH (209 aa).

Positions 3–209 (SVAVIDYGMG…ANFLTWNGVS (207 aa)) constitute a Glutamine amidotransferase type-1 domain. Cys-82 serves as the catalytic Nucleophile. Active-site residues include His-187 and Glu-189.

Heterodimer of HisH and HisF.

It is found in the cytoplasm. It catalyses the reaction 5-[(5-phospho-1-deoxy-D-ribulos-1-ylimino)methylamino]-1-(5-phospho-beta-D-ribosyl)imidazole-4-carboxamide + L-glutamine = D-erythro-1-(imidazol-4-yl)glycerol 3-phosphate + 5-amino-1-(5-phospho-beta-D-ribosyl)imidazole-4-carboxamide + L-glutamate + H(+). The enzyme catalyses L-glutamine + H2O = L-glutamate + NH4(+). The protein operates within amino-acid biosynthesis; L-histidine biosynthesis; L-histidine from 5-phospho-alpha-D-ribose 1-diphosphate: step 5/9. Functionally, IGPS catalyzes the conversion of PRFAR and glutamine to IGP, AICAR and glutamate. The HisH subunit catalyzes the hydrolysis of glutamine to glutamate and ammonia as part of the synthesis of IGP and AICAR. The resulting ammonia molecule is channeled to the active site of HisF. The polypeptide is Imidazole glycerol phosphate synthase subunit HisH (Nitrosococcus oceani (strain ATCC 19707 / BCRC 17464 / JCM 30415 / NCIMB 11848 / C-107)).